A 643-amino-acid polypeptide reads, in one-letter code: uncharacterized protein (643 aa).

The chain crosses the membrane as a helical span at residues 9–29 (IVLALLLLLLPVVCGDVSVYK).

The protein localises to the membrane. This is an uncharacterized protein from Methanocaldococcus jannaschii (strain ATCC 43067 / DSM 2661 / JAL-1 / JCM 10045 / NBRC 100440) (Methanococcus jannaschii).